We begin with the raw amino-acid sequence, 223 residues long: Phosphoribosylformylglycinamidine synthase subunit PurQ (223 aa).

In terms of domain architecture, Glutamine amidotransferase type-1 spans 2–223 (KVAIIRFPGT…LLENFINFNF (222 aa)). Cysteine 84 acts as the Nucleophile in catalysis. Catalysis depends on residues histidine 192 and glutamate 194.

In terms of assembly, part of the FGAM synthase complex composed of 1 PurL, 1 PurQ and 2 PurS subunits.

The protein localises to the cytoplasm. It catalyses the reaction N(2)-formyl-N(1)-(5-phospho-beta-D-ribosyl)glycinamide + L-glutamine + ATP + H2O = 2-formamido-N(1)-(5-O-phospho-beta-D-ribosyl)acetamidine + L-glutamate + ADP + phosphate + H(+). It carries out the reaction L-glutamine + H2O = L-glutamate + NH4(+). Its pathway is purine metabolism; IMP biosynthesis via de novo pathway; 5-amino-1-(5-phospho-D-ribosyl)imidazole from N(2)-formyl-N(1)-(5-phospho-D-ribosyl)glycinamide: step 1/2. Part of the phosphoribosylformylglycinamidine synthase complex involved in the purines biosynthetic pathway. Catalyzes the ATP-dependent conversion of formylglycinamide ribonucleotide (FGAR) and glutamine to yield formylglycinamidine ribonucleotide (FGAM) and glutamate. The FGAM synthase complex is composed of three subunits. PurQ produces an ammonia molecule by converting glutamine to glutamate. PurL transfers the ammonia molecule to FGAR to form FGAM in an ATP-dependent manner. PurS interacts with PurQ and PurL and is thought to assist in the transfer of the ammonia molecule from PurQ to PurL. This is Phosphoribosylformylglycinamidine synthase subunit PurQ from Campylobacter jejuni subsp. jejuni serotype O:2 (strain ATCC 700819 / NCTC 11168).